We begin with the raw amino-acid sequence, 222 residues long: Deoxyribose-phosphate aldolase (222 aa).

The Proton donor/acceptor role is filled by aspartate 89. The active-site Schiff-base intermediate with acetaldehyde is lysine 152. Lysine 181 functions as the Proton donor/acceptor in the catalytic mechanism.

Belongs to the DeoC/FbaB aldolase family. DeoC type 1 subfamily.

The protein localises to the cytoplasm. It catalyses the reaction 2-deoxy-D-ribose 5-phosphate = D-glyceraldehyde 3-phosphate + acetaldehyde. It functions in the pathway carbohydrate degradation; 2-deoxy-D-ribose 1-phosphate degradation; D-glyceraldehyde 3-phosphate and acetaldehyde from 2-deoxy-alpha-D-ribose 1-phosphate: step 2/2. Functionally, catalyzes a reversible aldol reaction between acetaldehyde and D-glyceraldehyde 3-phosphate to generate 2-deoxy-D-ribose 5-phosphate. This chain is Deoxyribose-phosphate aldolase, found in Alkaliphilus oremlandii (strain OhILAs) (Clostridium oremlandii (strain OhILAs)).